Consider the following 316-residue polypeptide: Acetyl-coenzyme A carboxylase carboxyl transferase subunit alpha (316 aa).

The CoA carboxyltransferase C-terminal domain occupies 35–292 (EIEILSQKLE…KTYVLQELKD (258 aa)).

Belongs to the AccA family. Acetyl-CoA carboxylase is a heterohexamer composed of biotin carboxyl carrier protein (AccB), biotin carboxylase (AccC) and two subunits each of ACCase subunit alpha (AccA) and ACCase subunit beta (AccD).

Its subcellular location is the cytoplasm. The enzyme catalyses N(6)-carboxybiotinyl-L-lysyl-[protein] + acetyl-CoA = N(6)-biotinyl-L-lysyl-[protein] + malonyl-CoA. Its pathway is lipid metabolism; malonyl-CoA biosynthesis; malonyl-CoA from acetyl-CoA: step 1/1. Its function is as follows. Component of the acetyl coenzyme A carboxylase (ACC) complex. First, biotin carboxylase catalyzes the carboxylation of biotin on its carrier protein (BCCP) and then the CO(2) group is transferred by the carboxyltransferase to acetyl-CoA to form malonyl-CoA. The chain is Acetyl-coenzyme A carboxylase carboxyl transferase subunit alpha from Alkaliphilus oremlandii (strain OhILAs) (Clostridium oremlandii (strain OhILAs)).